The sequence spans 162 residues: MHTRALYPGTFDPITNGHADLIERASQLFSHVIVAIASNPSKKPLFTLEERVEMIKKVTADLPNVEVVGFTGLLADFADEQNATILIRGLRAVSDFEYEFQLANMNRRLNPKLESVFLTPAEENSFISSTLVKEVALHRGAVSGFCHPVVEQALRDRLGKKN.

Thr-10 is a substrate binding site. ATP contacts are provided by residues 10–11 (TF) and His-18. Substrate-binding residues include Lys-42, Leu-74, and Arg-88. ATP is bound by residues 89–91 (GLR), Glu-99, and 124–130 (NSFISST).

This sequence belongs to the bacterial CoaD family. As to quaternary structure, homohexamer. Mg(2+) is required as a cofactor.

It localises to the cytoplasm. The catalysed reaction is (R)-4'-phosphopantetheine + ATP + H(+) = 3'-dephospho-CoA + diphosphate. The protein operates within cofactor biosynthesis; coenzyme A biosynthesis; CoA from (R)-pantothenate: step 4/5. Reversibly transfers an adenylyl group from ATP to 4'-phosphopantetheine, yielding dephospho-CoA (dPCoA) and pyrophosphate. In Alteromonas mediterranea (strain DSM 17117 / CIP 110805 / LMG 28347 / Deep ecotype), this protein is Phosphopantetheine adenylyltransferase.